Consider the following 176-residue polypeptide: Large ribosomal subunit protein uL6 (176 aa).

This sequence belongs to the universal ribosomal protein uL6 family. Part of the 50S ribosomal subunit.

Its function is as follows. This protein binds to the 23S rRNA, and is important in its secondary structure. It is located near the subunit interface in the base of the L7/L12 stalk, and near the tRNA binding site of the peptidyltransferase center. This is Large ribosomal subunit protein uL6 from Lactobacillus helveticus (strain DPC 4571).